Here is a 101-residue protein sequence, read N- to C-terminus: NAD(P)H-quinone oxidoreductase subunit 4L, chloroplastic (101 aa).

2 consecutive transmembrane segments (helical) span residues 2–22 (MFEH…YGLI) and 61–81 (IFSI…LAIV).

The protein belongs to the complex I subunit 4L family. In terms of assembly, NDH is composed of at least 16 different subunits, 5 of which are encoded in the nucleus.

The protein localises to the plastid. It localises to the chloroplast thylakoid membrane. The enzyme catalyses a plastoquinone + NADH + (n+1) H(+)(in) = a plastoquinol + NAD(+) + n H(+)(out). It carries out the reaction a plastoquinone + NADPH + (n+1) H(+)(in) = a plastoquinol + NADP(+) + n H(+)(out). Its function is as follows. NDH shuttles electrons from NAD(P)H:plastoquinone, via FMN and iron-sulfur (Fe-S) centers, to quinones in the photosynthetic chain and possibly in a chloroplast respiratory chain. The immediate electron acceptor for the enzyme in this species is believed to be plastoquinone. Couples the redox reaction to proton translocation, and thus conserves the redox energy in a proton gradient. The protein is NAD(P)H-quinone oxidoreductase subunit 4L, chloroplastic of Dioscorea elephantipes (Elephant's foot yam).